The primary structure comprises 387 residues: Probable NADH-dependent butanol dehydrogenase 1 (387 aa).

It belongs to the iron-containing alcohol dehydrogenase family.

Its pathway is alcohol metabolism; butanol biosynthesis. The chain is Probable NADH-dependent butanol dehydrogenase 1 (yugJ) from Bacillus subtilis (strain 168).